Here is a 366-residue protein sequence, read N- to C-terminus: Putative [LysW]-aminoadipate semialdehyde/glutamate semialdehyde transaminase (366 aa).

Residues 90–91 (GT) and phenylalanine 117 contribute to the pyridoxal 5'-phosphate site. Arginine 120 serves as a coordination point for substrate. Position 202 to 205 (202 to 205 (DEVQ)) interacts with pyridoxal 5'-phosphate. At lysine 230 the chain carries N6-(pyridoxal phosphate)lysine. Serine 254 serves as a coordination point for substrate. Threonine 255 contributes to the pyridoxal 5'-phosphate binding site.

This sequence belongs to the class-III pyridoxal-phosphate-dependent aminotransferase family. LysJ subfamily. In terms of assembly, homodimer. Pyridoxal 5'-phosphate is required as a cofactor.

Its subcellular location is the cytoplasm. It carries out the reaction [amino-group carrier protein]-C-terminal-gamma-(L-lysyl)-L-glutamate + 2-oxoglutarate = [amino-group carrier protein]-C-terminal-N-(1-carboxy-5-oxopentan-1-yl)-L-glutamine + L-glutamate. The enzyme catalyses [amino-group carrier protein]-C-terminal-gamma-(L-ornithyl)-L-glutamate + 2-oxoglutarate = [amino-group carrier protein]-C-terminal-gamma-(L-glutamyl-5-semialdehyde)-L-glutamate + L-glutamate. It functions in the pathway amino-acid biosynthesis; L-lysine biosynthesis via AAA pathway; L-lysine from L-alpha-aminoadipate (Thermus route): step 4/5. The protein operates within amino-acid biosynthesis; L-arginine biosynthesis. Its function is as follows. Involved in both the arginine and lysine biosynthetic pathways. The sequence is that of Putative [LysW]-aminoadipate semialdehyde/glutamate semialdehyde transaminase from Pyrococcus horikoshii (strain ATCC 700860 / DSM 12428 / JCM 9974 / NBRC 100139 / OT-3).